The chain runs to 144 residues: Bacilliredoxin BT9727_3899 (144 aa).

Belongs to the bacilliredoxin family.

In Bacillus thuringiensis subsp. konkukian (strain 97-27), this protein is Bacilliredoxin BT9727_3899.